We begin with the raw amino-acid sequence, 863 residues long: DNA-directed RNA polymerase subunit beta' (863 aa).

The tract at residues 1–83 (MSGEVAQDQP…SKKKETKASQ (83 aa)) is disordered. A compositionally biased stretch (polar residues) spans 23-36 (EIVNSAITVQSSAK). Zn(2+) contacts are provided by Cys-159, Cys-161, Cys-180, and Cys-183. 3 residues coordinate Mg(2+): Asp-621, Asp-623, and Asp-625.

The protein belongs to the RNA polymerase beta' chain family. RpoC1 subfamily. As to quaternary structure, in plastids the minimal PEP RNA polymerase catalytic core is composed of four subunits: alpha, beta, beta', and beta''. When a (nuclear-encoded) sigma factor is associated with the core the holoenzyme is formed, which can initiate transcription. Requires Mg(2+) as cofactor. Zn(2+) is required as a cofactor.

Its subcellular location is the plastid. It localises to the chloroplast. The catalysed reaction is RNA(n) + a ribonucleoside 5'-triphosphate = RNA(n+1) + diphosphate. In terms of biological role, DNA-dependent RNA polymerase catalyzes the transcription of DNA into RNA using the four ribonucleoside triphosphates as substrates. This Nephroselmis olivacea (Green alga) protein is DNA-directed RNA polymerase subunit beta'.